The chain runs to 233 residues: Guanylate kinase (233 aa).

Residues 3 to 184 (GTIFIISAPS…AVEQLRAIVL (182 aa)) enclose the Guanylate kinase-like domain. An ATP-binding site is contributed by 10–17 (APSGSGKS).

It belongs to the guanylate kinase family.

Its subcellular location is the cytoplasm. It carries out the reaction GMP + ATP = GDP + ADP. In terms of biological role, essential for recycling GMP and indirectly, cGMP. The chain is Guanylate kinase from Koribacter versatilis (strain Ellin345).